The primary structure comprises 570 residues: Urease subunit alpha (570 aa).

A Urease domain is found at 131–570 (GGMDSHIHFI…LPMAQRYFLF (440 aa)). Residues histidine 136, histidine 138, and lysine 219 each coordinate Ni(2+). Lysine 219 carries the post-translational modification N6-carboxylysine. Histidine 221 provides a ligand contact to substrate. Ni(2+) contacts are provided by histidine 248 and histidine 274. Residue histidine 322 is the Proton donor of the active site. Aspartate 362 contacts Ni(2+).

Belongs to the metallo-dependent hydrolases superfamily. Urease alpha subunit family. Heterotrimer of UreA (gamma), UreB (beta) and UreC (alpha) subunits. Three heterotrimers associate to form the active enzyme. Ni cation serves as cofactor. Post-translationally, carboxylation allows a single lysine to coordinate two nickel ions.

It localises to the cytoplasm. The enzyme catalyses urea + 2 H2O + H(+) = hydrogencarbonate + 2 NH4(+). The protein operates within nitrogen metabolism; urea degradation; CO(2) and NH(3) from urea (urease route): step 1/1. This is Urease subunit alpha from Sinorhizobium medicae (strain WSM419) (Ensifer medicae).